The primary structure comprises 221 residues: MAKNKFNQSWLHDHINDPYVKMAQREGYRARAAYKLKEIDDQDKLIQPGQVIVDLGAAPGSWSQYARNKLAASPRAKDGRIDGAVVAIDILPMEPVADVTFIQGDFREEEVFRQLEQVVLDASGGSRIDLVISDMAPNLSGVASADAARIEYLCDLALDFAQAHLKPEGSLLVKCFHGSGYSQIVEKFKRQFKVVASRKPKASRDKSSETFILGRYLKSVD.

Residues Gly-60, Trp-62, Asp-89, Asp-105, and Asp-134 each coordinate S-adenosyl-L-methionine. Catalysis depends on Lys-174, which acts as the Proton acceptor.

This sequence belongs to the class I-like SAM-binding methyltransferase superfamily. RNA methyltransferase RlmE family.

The protein localises to the cytoplasm. The enzyme catalyses uridine(2552) in 23S rRNA + S-adenosyl-L-methionine = 2'-O-methyluridine(2552) in 23S rRNA + S-adenosyl-L-homocysteine + H(+). Functionally, specifically methylates the uridine in position 2552 of 23S rRNA at the 2'-O position of the ribose in the fully assembled 50S ribosomal subunit. The chain is Ribosomal RNA large subunit methyltransferase E from Cupriavidus metallidurans (strain ATCC 43123 / DSM 2839 / NBRC 102507 / CH34) (Ralstonia metallidurans).